The sequence spans 60 residues: MKDTILILFTAFIALLGFFGMSAEALADPLADPSAGPNAEADPEAINLKAIAALVKKVLG.

Residues 1–27 form the signal peptide; it reads MKDTILILFTAFIALLGFFGMSAEALA. AXPX repeat units lie at residues 27 to 30, 31 to 34, 35 to 38, and 41 to 44; these read ADPL, ADPS, AGPN, and ADPE. Positions 28 to 45 are excised as a propeptide; the sequence is DPLADPSAGPNAEADPEA. Leucine amide is present on L59.

Belongs to the MCD family. Mastoparan subfamily. Expressed by the venom gland.

Its subcellular location is the secreted. The protein localises to the target cell membrane. Mast cell degranulating peptide. Its mast cell degranulation activity may be related to the activation of G-protein coupled receptors in mast cells as well as interaction with other proteins located in cell endosomal membranes in the mast cells. Has a membranolytic activity on human glioblastoma multiforme cells (brain tumor cells) that leads to cell necrosis. This is Mastoparan from Vespa orientalis (Oriental hornet).